Consider the following 223-residue polypeptide: Cytidylate kinase (223 aa).

10–18 (GPAGTGKSS) contributes to the ATP binding site.

It belongs to the cytidylate kinase family. Type 1 subfamily.

The protein localises to the cytoplasm. It carries out the reaction CMP + ATP = CDP + ADP. The catalysed reaction is dCMP + ATP = dCDP + ADP. This chain is Cytidylate kinase, found in Mycobacterium leprae (strain Br4923).